The sequence spans 301 residues: Polyamine aminopropyltransferase (301 aa).

Residues 4–240 (WHWLLEWQTP…GLWGFVYGGV (237 aa)) enclose the PABS domain. Q33 lines the S-methyl-5'-thioadenosine pocket. 2 residues coordinate spermidine: H64 and E89. Residues D109 and 141-142 (DG) each bind S-methyl-5'-thioadenosine. The active-site Proton acceptor is D159.

This sequence belongs to the spermidine/spermine synthase family. Homodimer or homotetramer.

It is found in the cytoplasm. It carries out the reaction S-adenosyl 3-(methylsulfanyl)propylamine + putrescine = S-methyl-5'-thioadenosine + spermidine + H(+). Its pathway is amine and polyamine biosynthesis; spermidine biosynthesis; spermidine from putrescine: step 1/1. Functionally, catalyzes the irreversible transfer of a propylamine group from the amino donor S-adenosylmethioninamine (decarboxy-AdoMet) to putrescine (1,4-diaminobutane) to yield spermidine. The polypeptide is Polyamine aminopropyltransferase (Saccharolobus islandicus (strain L.S.2.15 / Lassen #1) (Sulfolobus islandicus)).